A 466-amino-acid polypeptide reads, in one-letter code: UDP-N-acetylmuramoylalanine--D-glutamate ligase (466 aa).

128–134 is an ATP binding site; sequence GTNGKST.

It belongs to the MurCDEF family.

It localises to the cytoplasm. It catalyses the reaction UDP-N-acetyl-alpha-D-muramoyl-L-alanine + D-glutamate + ATP = UDP-N-acetyl-alpha-D-muramoyl-L-alanyl-D-glutamate + ADP + phosphate + H(+). It functions in the pathway cell wall biogenesis; peptidoglycan biosynthesis. In terms of biological role, cell wall formation. Catalyzes the addition of glutamate to the nucleotide precursor UDP-N-acetylmuramoyl-L-alanine (UMA). The sequence is that of UDP-N-acetylmuramoylalanine--D-glutamate ligase from Bartonella henselae (strain ATCC 49882 / DSM 28221 / CCUG 30454 / Houston 1) (Rochalimaea henselae).